A 482-amino-acid chain; its full sequence is ATP synthase subunit beta (482 aa).

167 to 174 (GGAGVGKT) provides a ligand contact to ATP.

The protein belongs to the ATPase alpha/beta chains family. F-type ATPases have 2 components, CF(1) - the catalytic core - and CF(0) - the membrane proton channel. CF(1) has five subunits: alpha(3), beta(3), gamma(1), delta(1), epsilon(1). CF(0) has three main subunits: a(1), b(2) and c(9-12). The alpha and beta chains form an alternating ring which encloses part of the gamma chain. CF(1) is attached to CF(0) by a central stalk formed by the gamma and epsilon chains, while a peripheral stalk is formed by the delta and b chains.

The protein resides in the cell membrane. It catalyses the reaction ATP + H2O + 4 H(+)(in) = ADP + phosphate + 5 H(+)(out). Functionally, produces ATP from ADP in the presence of a proton gradient across the membrane. The catalytic sites are hosted primarily by the beta subunits. In Corynebacterium aurimucosum (strain ATCC 700975 / DSM 44827 / CIP 107346 / CN-1) (Corynebacterium nigricans), this protein is ATP synthase subunit beta.